Reading from the N-terminus, the 242-residue chain is Large ribosomal subunit protein uL30x (242 aa).

Belongs to the universal ribosomal protein uL30 family.

The protein is Large ribosomal subunit protein uL30x (RPL7C) of Arabidopsis thaliana (Mouse-ear cress).